The primary structure comprises 102 residues: Flagellar hook-basal body complex protein FliE (102 aa).

It belongs to the FliE family.

It is found in the bacterial flagellum basal body. The chain is Flagellar hook-basal body complex protein FliE from Oceanobacillus iheyensis (strain DSM 14371 / CIP 107618 / JCM 11309 / KCTC 3954 / HTE831).